We begin with the raw amino-acid sequence, 889 residues long: Extended synaptotagmin-3 (889 aa).

Positions 1 to 65 (MAQGDPGGQT…GPRDPGQGGA (65 aa)) are disordered. Residues 1-66 (MAQGDPGGQT…PRDPGQGGAG (66 aa)) lie on the Cytoplasmic side of the membrane. Basic and acidic residues-rich tracts occupy residues 17–28 (TDKKPDEPKATE) and 41–58 (PGGE…KGPR). The next 2 helical transmembrane spans lie at 67–91 (EALA…FPVY) and 92–112 (LCGR…LWMF). Residues 113–889 (WTRNKKFKLA…ELTPTGLPTS (777 aa)) lie on the Cytoplasmic side of the membrane. The 179-residue stretch at 155 to 333 (DVERVEWLNK…LPNRFTVPLS (179 aa)) folds into the SMP-LTD domain. C2 domains follow at residues 331–452 (PLSS…DEWF) and 468–618 (WLSL…STIK). Positions 363, 364, 376, 423, 424, 425, 427, 429, and 430 each coordinate Ca(2+). Residues 649-724 (SIKRAQSQQH…GAVPESHTPS (76 aa)) are disordered. Residues 658-671 (HKSHGKSHQAHHQA) show a composition bias toward basic residues. Composition is skewed to low complexity over residues 672 to 682 (HQTQQNHTVQQ) and 691 to 714 (ISTT…PNST). The region spanning 757–879 (MTGEVEVSVR…DLVKGFTKWF (123 aa)) is the C2 3 domain. Residues 804-811 (RKWSGRKK) are required for phosphatidylinositol 4,5-bisphosphate-dependent location at the cell membrane.

This sequence belongs to the extended synaptotagmin family.

Its subcellular location is the cell membrane. It is found in the endoplasmic reticulum membrane. Tethers the endoplasmic reticulum to the cell membrane and promotes the formation of appositions between the endoplasmic reticulum and the cell membrane. Binds glycerophospholipids in a barrel-like domain and may play a role in cellular lipid transport. This is Extended synaptotagmin-3 (esyt3) from Xenopus tropicalis (Western clawed frog).